Consider the following 273-residue polypeptide: Pantothenate synthetase (273 aa).

ATP is bound at residue 27–34 (MGALHDGH). The Proton donor role is filled by His34. Residue Gln58 participates in (R)-pantoate binding. Gln58 is a binding site for beta-alanine. 144–147 (GKKD) contacts ATP. Gln150 contacts (R)-pantoate. ATP contacts are provided by residues Val173 and 181–184 (LSSR).

It belongs to the pantothenate synthetase family. As to quaternary structure, homodimer.

It localises to the cytoplasm. The enzyme catalyses (R)-pantoate + beta-alanine + ATP = (R)-pantothenate + AMP + diphosphate + H(+). The protein operates within cofactor biosynthesis; (R)-pantothenate biosynthesis; (R)-pantothenate from (R)-pantoate and beta-alanine: step 1/1. Functionally, catalyzes the condensation of pantoate with beta-alanine in an ATP-dependent reaction via a pantoyl-adenylate intermediate. In Campylobacter concisus (strain 13826), this protein is Pantothenate synthetase.